The following is a 482-amino-acid chain: MLNRVDFGGRPFHFIGIGGIGMSALAHVLVKHKLPVSGSDARLNPITEQLQHLGVRIFPQQEATNLLALPQLPQVVCSTAIHADNPEYKMAVELGCPILHRSDLLAALIERYQSIAVAGTHGKTTTSSMIGYLLLQGGVDPTIIIGGEVQAWEGNARTGMGEYLVAEADESDGSLAKFAPQIGVITNIELDHPDHYSNLEQVIKIFETFANHCQTVVACWDCPTIRDRLTVLPDQSVVSYSLFRESGADYSVDQISYGPQGTLAQVWERGELLGELSTKLLGAHNLKNALAAVAVGRLLGLDFITISRGIARFEGARRRFEVRGEAHGIRFVDDYAHHPSEIRATLAAGRLQLKSREEFISPWQRLVAVFQPHRYTRTFTFLTEFSQAFGDADLVVLTDIYSAGERDRLVQGQHLADCMAEYHAQVQYQPSLEEVKLFLKQTLRPGDLVLVLGAGNLNQIIPELLDYYQTLPIETISEVVPL.

119-125 (GTHGKTT) serves as a coordination point for ATP.

It belongs to the MurCDEF family.

The protein localises to the cytoplasm. The enzyme catalyses UDP-N-acetyl-alpha-D-muramate + L-alanine + ATP = UDP-N-acetyl-alpha-D-muramoyl-L-alanine + ADP + phosphate + H(+). It functions in the pathway cell wall biogenesis; peptidoglycan biosynthesis. Functionally, cell wall formation. The chain is UDP-N-acetylmuramate--L-alanine ligase from Cyanothece sp. (strain PCC 7425 / ATCC 29141).